The sequence spans 241 residues: LTAKLSYPIYDDLDIYTRLGGMVWRADAKNNVGGGDRSNHDTGVSPVFAGGVEYAWTPSIATRLEYQWINNIGDAGTVGTRPDNGMLSVGVSYRFGQDEAAPVVAPAPAPAPQVQTKHFTLKSDVLFNFNKSTLKPEGQQALDQLYTQLSNLDPKDGAVVVLGYTDRIGSDAYNQRLSQQRAQSVVDYLVSKGIPAGKITAQGQGESNPVTGSTCDNVKQRAALIDCLAPDRRVEIEVKGV.

5 consecutive transmembrane segments (beta stranded) span residues 1–8 (LTAKLSYP), 13–21 (LDIYTRLGG), 46–55 (PVFAGGVEYA), 60–67 (IATRLEYQ), and 86–94 (MLSVGVSYR). Repeat copies occupy residues 105 to 106 (AP), 107 to 108 (AP), 109 to 110 (AP), and 111 to 112 (AP). Residues 105–112 (APAPAPAP) are 4 X 2 AA tandem repeats of A-P. In terms of domain architecture, OmpA-like spans 114 to 241 (VQTKHFTLKS…RRVEIEVKGV (128 aa)). An intrachain disulfide couples C215 to C227.

This sequence belongs to the outer membrane OOP (TC 1.B.6) superfamily. OmpA family. As to quaternary structure, monomer and homodimer.

It is found in the cell outer membrane. With TolR probably plays a role in maintaining the position of the peptidoglycan cell wall in the periplasm. Acts as a porin with low permeability that allows slow penetration of small solutes; an internal gate slows down solute passage. In Shimwellia blattae (Escherichia blattae), this protein is Outer membrane protein A.